The chain runs to 560 residues: Eukaryotic translation initiation factor 3 subunit D-1 (560 aa).

Positions 98–166 (VQKPPHQRGR…RGPPPKMRES (69 aa)) are disordered. Over residues 100 to 121 (KPPHQRGRFRNMRNSRSGRGRN) the composition is skewed to basic residues. The residue at position 128 (Thr128) is a Phosphothreonine. The segment covering 147 to 156 (GRGMGKKFGH) has biased composition (basic residues). The interval 291-305 (EFDLLTVNESSVEPP) is RNA gate.

Belongs to the eIF-3 subunit D family. In terms of assembly, component of the eukaryotic translation initiation factor 3 (eIF-3) complex. The eIF-3 complex interacts with pix.

It localises to the cytoplasm. In terms of biological role, mRNA cap-binding component of the eukaryotic translation initiation factor 3 (eIF-3) complex, which is involved in protein synthesis of a specialized repertoire of mRNAs and, together with other initiation factors, stimulates binding of mRNA and methionyl-tRNAi to the 40S ribosome. The eIF-3 complex specifically targets and initiates translation of a subset of mRNAs involved in cell proliferation. In the eIF-3 complex, eif3d specifically recognizes and binds the 7-methylguanosine cap of a subset of mRNAs. This is Eukaryotic translation initiation factor 3 subunit D-1 from Drosophila simulans (Fruit fly).